A 363-amino-acid polypeptide reads, in one-letter code: MSAADMARKNSLINRQLEKEKIDSKKMLKILLLGGPECGKSTIFKQMKIIHMNGFSDLDYVNFRYLIYSNIMQSMDQLLEAAEFFHFPPDDSPSIRRALNHYKSYKVRYSTSEVELNRELADSLSKLYNAEFIKSVLNRKNELKLLDSAVYFLDDIDRISAHEYKPTEMDVLRARVPTTGITEIEFPFKQASLRMVDVGGQRSEQRKWIHCFDNVNGVLFIAAISGYNLYDEDEENRKDDGTPTKTNRLRYSMELFKRIANHQCFSKKTAMILFLNKIDIFKEKIGKYPLTTCFKNYKGVNAFEPACKYVTDRFSRLVSGDIQHEKPLYTHITNATDTRNIDRVFDSCMDVIFKISMEKVGFM.

Residues 26 to 363 enclose the G-alpha domain; that stretch reads KMLKILLLGG…KISMEKVGFM (338 aa). The segment at 29–42 is G1 motif; it reads KILLLGGPECGKST. Residues 34 to 41, 172 to 178, 197 to 201, 276 to 279, and A335 each bind GTP; these read GGPECGKS, LRARVPT, DVGGQ, and NKID. S41 and T178 together coordinate Mg(2+). The interval 170–178 is G2 motif; sequence DVLRARVPT. The interval 193 to 202 is G3 motif; it reads LRMVDVGGQR. Positions 272-279 are G4 motif; the sequence is ILFLNKID. The interval 333-338 is G5 motif; sequence TNATDT.

Belongs to the G-alpha family. G proteins are composed of 3 units; alpha, beta and gamma. The alpha chain contains the guanine nucleotide binding site. In terms of tissue distribution, expressed in ADL and ASH neurons.

Functionally, guanine nucleotide-binding proteins (G proteins) are involved as modulators or transducers in various transmembrane signaling systems. Mediates the transduction of food and serotonin signals, which modulates the avoidance response to the odorant octanol. Has a role in lifespan to promote longevity. The chain is Guanine nucleotide-binding protein alpha-11 subunit (gpa-11) from Caenorhabditis elegans.